Here is a 275-residue protein sequence, read N- to C-terminus: 2,3,4,5-tetrahydropyridine-2,6-dicarboxylate N-succinyltransferase (275 aa).

Belongs to the transferase hexapeptide repeat family.

The protein localises to the cytoplasm. The catalysed reaction is (S)-2,3,4,5-tetrahydrodipicolinate + succinyl-CoA + H2O = (S)-2-succinylamino-6-oxoheptanedioate + CoA. It participates in amino-acid biosynthesis; L-lysine biosynthesis via DAP pathway; LL-2,6-diaminopimelate from (S)-tetrahydrodipicolinate (succinylase route): step 1/3. This Paraburkholderia phymatum (strain DSM 17167 / CIP 108236 / LMG 21445 / STM815) (Burkholderia phymatum) protein is 2,3,4,5-tetrahydropyridine-2,6-dicarboxylate N-succinyltransferase.